The chain runs to 102 residues: MYAIIKHSGKQYRVSQGDELKLDRFEAEVKSSVEVSEVLAVCDKELKVGAPFVAGAKVVLEVIAHGKDKKVVIYKKRRRKDSKLKRGFRRQFTRVRVVDIKA.

It belongs to the bacterial ribosomal protein bL21 family. In terms of assembly, part of the 50S ribosomal subunit. Contacts protein L20.

In terms of biological role, this protein binds to 23S rRNA in the presence of protein L20. In Campylobacter lari (strain RM2100 / D67 / ATCC BAA-1060), this protein is Large ribosomal subunit protein bL21.